Reading from the N-terminus, the 359-residue chain is Type-1 angiotensin II receptor (359 aa).

Residues 1–25 (MVPNYSTEETVKRIHVDCPVSGRHS) lie on the Extracellular side of the membrane. A glycan (N-linked (GlcNAc...) asparagine) is linked at Asn-4. Angiotensin II is bound at residue Asp-17. 2 cysteine pairs are disulfide-bonded: Cys-18/Cys-274 and Cys-101/Cys-180. Residues 26–55 (YIYIMVPTVYSIIFIIGIFGNSLVVIVIYC) traverse the membrane as a helical segment. Over 56–61 (YMKLKT) the chain is Cytoplasmic. A helical transmembrane segment spans residues 62–89 (VASIFLLNLALADLCFLITLPLWAAYTA). The Extracellular segment spans residues 90-98 (MEYQWPFGN). A helical membrane pass occupies residues 99–125 (CLCKLASAGISFNLYASVFLLTCLSID). Over 126-141 (RYLAIVHPVKSRIRRT) the chain is Cytoplasmic. The chain crosses the membrane as a helical span at residues 142-165 (MFVARVTCIVIWLLAGVASLPVII). Topologically, residues 166-190 (HRNIFFAENLNMTVCGFRYDNNNTT) are extracellular. Arg-167 serves as a coordination point for angiotensin II. N-linked (GlcNAc...) asparagine glycosylation occurs at Asn-176. Positions 182 and 184 each coordinate angiotensin II. N-linked (GlcNAc...) asparagine glycosylation is found at Asn-187 and Asn-188. Residues 191 to 216 (LRVGLGLSKNLLGFLIPFLIILTSYT) form a helical membrane-spanning segment. Lys-199 contacts angiotensin II. The Cytoplasmic portion of the chain corresponds to 217–239 (LIWKTLKKAYQIQRNKTRNDDIF). A helical membrane pass occupies residues 240 to 268 (KMIVAIVFFFFFSWIPHQVFTFLDVLIQL). The Extracellular segment spans residues 269–278 (HVITDCKITD). Residues 279–304 (IVDTAMPFTICIAYFNNCLNPFFYVF) form a helical membrane-spanning segment. Over 305–359 (FGKNFKKYFLQLIKYIPPNVSTHPSLTTKMSSLSYRPPENIRLPTKKTAGSFDTE) the chain is Cytoplasmic.

Belongs to the G-protein coupled receptor 1 family. In terms of processing, C-terminal Ser or Thr residues may be phosphorylated. Adrenal medulla.

The protein resides in the cell membrane. Functionally, receptor for angiotensin II, a vasoconstricting peptide, which acts as a key regulator of blood pressure and sodium retention by the kidney. The activated receptor in turn couples to G-alpha proteins G(q) (GNAQ, GNA11, GNA14 or GNA15) and thus activates phospholipase C and increases the cytosolic Ca(2+) concentrations, which in turn triggers cellular responses such as stimulation of protein kinase C. This is Type-1 angiotensin II receptor (AGTR1) from Meleagris gallopavo (Wild turkey).